Consider the following 547-residue polypeptide: Chaperonin GroEL 1 (547 aa).

ATP-binding positions include 30–33 (TLGP), Lys51, 87–91 (DGTTT), Gly415, and Asp495.

The protein belongs to the chaperonin (HSP60) family. Forms a cylinder of 14 subunits composed of two heptameric rings stacked back-to-back. Interacts with the co-chaperonin GroES.

The protein localises to the cytoplasm. The catalysed reaction is ATP + H2O + a folded polypeptide = ADP + phosphate + an unfolded polypeptide.. Its function is as follows. Together with its co-chaperonin GroES, plays an essential role in assisting protein folding. The GroEL-GroES system forms a nano-cage that allows encapsulation of the non-native substrate proteins and provides a physical environment optimized to promote and accelerate protein folding. The polypeptide is Chaperonin GroEL 1 (Rhizobium johnstonii (strain DSM 114642 / LMG 32736 / 3841) (Rhizobium leguminosarum bv. viciae)).